A 286-amino-acid polypeptide reads, in one-letter code: NADP-dependent dehydrogenase clz5 (286 aa).

NADP(+) is bound by residues S49, L51, D93, Y207, K211, I241, and Q245. The active-site Proton acceptor is the Y207. Y207 serves as the catalytic Proton donor. The Lowers pKa of active site Tyr role is filled by K211.

The protein belongs to the short-chain dehydrogenases/reductases (SDR) family. As to quaternary structure, homodimer.

It is found in the cytoplasm. The protein resides in the cytosol. It functions in the pathway secondary metabolite biosynthesis. NADP-dependent dehydrogenase; part of the gene cluster that mediates the biosynthesis of squalestatin S1 (SQS1, also known as zaragozic acid A), a heavily oxidized fungal polyketide that offers potent cholesterol lowering activity by targeting squalene synthase (SS). SQS1 is composed of a 2,8-dioxobicyclic[3.2.1]octane-3,4,5-tricarboxyclic acid core that is connected to two lipophilic polyketide arms. These initial steps feature the priming of an unusual benzoic acid starter unit onto the highly reducing polyketide synthase clz14, followed by oxaloacetate extension and product release to generate a tricarboxylic acid containing product. The phenylalanine ammonia lyase (PAL) clz10 and the acyl-CoA ligase clz12 are involved in transforming phenylalanine into benzoyl-CoA. The citrate synthase-like protein clz17 is involved in connecting the C-alpha-carbons of the hexaketide chain and oxaloacetate to afford the tricarboxylic acid unit. The potential hydrolytic enzymes, clz11 and clz13, are in close proximity to pks2 and may participate in product release. On the other side, the tetraketide arm is synthesized by a the squalestatin tetraketide synthase clz2 and enzymatically esterified to the core in the last biosynthetic step, by the acetyltransferase clz6. The biosynthesis of the tetraketide must involve 3 rounds of chain extension. After the first and second rounds methyl-transfer occurs, and in all rounds of extension the ketoreductase and dehydratase are active. The enoyl reductase and C-MeT of clz2 are not active in the final round of extension. The acetyltransferase clz6 appears to have a broad substrate selectivity for its acyl CoA substrate, allowing the in vitro synthesis of novel squalestatins. The biosynthesis of SQS1 requires several oxidative steps likely performed by oxidoreductases clz3, clz15 and clz16. Finally, in support of the identification of the cluster as being responsible for SQS1 production, the cluster contains a gene encoding a putative squalene synthase (SS) clz20, suggesting a likely mechanism for self-resistance. The protein is NADP-dependent dehydrogenase clz5 of Cochliobolus lunatus (Filamentous fungus).